Here is a 114-residue protein sequence, read N- to C-terminus: Hydrogenase maturation factor HypA (114 aa).

Histidine 2 is a binding site for Ni(2+). Positions 74, 77, 90, and 93 each coordinate Zn(2+).

The protein belongs to the HypA/HybF family.

In terms of biological role, involved in the maturation of [NiFe] hydrogenases. Required for nickel insertion into the metal center of the hydrogenase. The polypeptide is Hydrogenase maturation factor HypA (Campylobacter jejuni subsp. jejuni serotype O:2 (strain ATCC 700819 / NCTC 11168)).